Reading from the N-terminus, the 158-residue chain is uncharacterized protein (158 aa).

Residues 12 to 73 (LDEIDRAILR…LINPFKAGYE (62 aa)) form the HTH asnC-type domain. Residues 31–50 (YSEISRRINVPESTVRARVN) constitute a DNA-binding region (H-T-H motif).

This is an uncharacterized protein from Pyrococcus abyssi (strain GE5 / Orsay).